The following is a 720-amino-acid chain: Calcium/calmodulin-dependent protein kinase type II (720 aa).

The 258-residue stretch at 12 to 269 (YDVKEELGKG…ADQALKVPWI (258 aa)) folds into the Protein kinase domain. Residues 18–26 (LGKGAFSVV) and K41 contribute to the ATP site. D134 acts as the Proton acceptor in catalysis. Position 284 is a phosphothreonine; by autocatalysis (T284). Disordered stretches follow at residues 317–345 (SDST…QPTS) and 504–586 (DNLS…NLSA). 2 stretches are compositionally biased toward polar residues: residues 504-514 (DNLSASTSSDL) and 526-540 (PPST…SQTI). A compositionally biased stretch (low complexity) spans 569 to 586 (SSSNSSTASKSSSTNLSA).

This sequence belongs to the protein kinase superfamily. CAMK Ser/Thr protein kinase family. CaMK subfamily. Dodecamer. Subunits are tightly packed around a central ring-shaped scaffold with extensive contacts between the regulatory segment of one kinase and the catalytic domain of another enabling cooperative activation of a subunit by the adjacent molecule. Interacts with and phosphorylates daf-16; the interaction promotes daf-16 nuclear localization. Interacts with egl-2 and tir-1. Interacts with nsy-1. Requires Mg(2+) as cofactor. As to expression, expressed in the nervous system. Observed in the ADF and AWC neurons. Position in AWC neurons is regulated by microtubules. Localized to clusters in ventral cord neurites which appear to be required for glr-1 trafficking. Also present in oocytes.

Its subcellular location is the cytoplasm. It is found in the cell projection. It localises to the axon. The protein localises to the perikaryon. The enzyme catalyses L-seryl-[protein] + ATP = O-phospho-L-seryl-[protein] + ADP + H(+). It carries out the reaction L-threonyl-[protein] + ATP = O-phospho-L-threonyl-[protein] + ADP + H(+). With respect to regulation, ca2(+)/calmodulin binding removes an autoinhibitory regulatory segment located C-terminal to the kinase domain. This releases the catalytic activity of the enzyme and makes accessible a regulatory residue Thr-284. Phosphorylation of Thr-284 by another kinase domain within the oligomeric holoenzyme keeps CaMKII active in the absence of Ca(2+)/calmodulin by preventing the rebinding of the regulatory segment to the kinase domain and by increasing the affinity of calmodulin for the enzyme. Can respond to high-frequency Ca(2+) pulses to become Ca(2+) independent. Acts in the signaling of a variety of pathways and processes. Phosphorylates 'Ser-319' of daf-16 in response to stress signals, such as heat, starvation and oxidation, which plays a role in prolonging lifespan. Required for viability under chronic osmotic stress in which it acts downstream of osr-1. Has roles in locomotion, oocyte maturation, brood size, egg laying, defecation, meiotic maturation and neuronal cell fate specification. Required for the regulation of synaptic density and neuromuscular junction morphology. Regulates the synaptic trafficking of glr-1. Bidirectional modulator of neurotransmitter release with negative modulatory effects mainly mediated via slo-1 activation. Involved in activation of ADF neurons and increased tph-1 transcription following exposure to pathogenic bacteria which leads to learned olfactory aversion to the bacteria. Implicated in the muscle regulation of spicule protraction. In conjunction with egl-2 has a role in the suppression of mating behavior under food deprivation to encourage foraging. Involved in restricting str-2 expression to only one of the two AWC neurons. May suppress the functional response to an internal pacemaker, perhaps by modulating the activity of the IP3 receptor. This Caenorhabditis elegans protein is Calcium/calmodulin-dependent protein kinase type II (unc-43).